The chain runs to 271 residues: Tryptophan synthase alpha chain (271 aa).

Residues glutamate 56 and aspartate 67 each act as proton acceptor in the active site.

This sequence belongs to the TrpA family. Tetramer of two alpha and two beta chains.

The enzyme catalyses (1S,2R)-1-C-(indol-3-yl)glycerol 3-phosphate + L-serine = D-glyceraldehyde 3-phosphate + L-tryptophan + H2O. It functions in the pathway amino-acid biosynthesis; L-tryptophan biosynthesis; L-tryptophan from chorismate: step 5/5. In terms of biological role, the alpha subunit is responsible for the aldol cleavage of indoleglycerol phosphate to indole and glyceraldehyde 3-phosphate. This chain is Tryptophan synthase alpha chain, found in Mycolicibacterium paratuberculosis (strain ATCC BAA-968 / K-10) (Mycobacterium paratuberculosis).